The sequence spans 157 residues: DFPPNTCCCICCFIDRMYQQNHFIISSNSNSSNQNKLVSSLEGKVWVQDVPSLHLLRFFLYEYRNWNSFITPKKCESMFVFLRDPFIHYVRYQAKSFLAARGTPLMMNKSQMLENSFLIDIAINKAKFCNALGHPISKPVRVWYLDIIRINDLVNHD.

The protein belongs to the intron maturase 2 family. MatK subfamily. Monomer. In terms of processing, glycosylated. As to expression, accumulates in latex (at protein level).

With respect to regulation, inhibited by HgCl(2), iodoacetamide (IAA) and, to a far lesser extent, by SDS, hydrogen peroxide H(1)O(2), KCl, NaCl, ZnCl(2), AgSO(4), CdCl(2), FeCl(3), PMSF, Pepstatin A and EDTA. Repressed moderately by many organic solvents such as diethyl ether, ethy lacetate, acetophenone, butanol, trichloroethylene, tetrahydrofuran, methanol, chloroform and dichloromethane, and, to a lesser extent, by propanol, benzyl alcohol and chlorobenzene. In terms of biological role, cysteine protease inducing milk clotting by cleaving casein. Exhibits biomedical activities such as wound healing, haemostatic and antibacterial activity, as well as agricultural application in biocontrol process against the infectious management of the root knot nematode Meloidogyne incognita. This Euphorbia nivulia (Leafy milk hedge) protein is Cysteine protease Nivulian-2.